The chain runs to 139 residues: Cytochrome c2 (139 aa).

A signal peptide spans 1–25; sequence MVKKLLTILSIAATAGSLSIGTASA. Glutamine 26 bears the Pyrrolidone carboxylic acid mark. 4 residues coordinate heme c: cysteine 38, cysteine 41, histidine 42, and methionine 118.

The protein belongs to the cytochrome c family. In terms of processing, binds 1 heme c group covalently per subunit.

Its function is as follows. Cytochrome c2 is found mainly in purple, non-sulfur, photosynthetic bacteria where it functions as the electron donor to the oxidized bacteriochlorophyll in the photophosphorylation pathway. However, it may also have a role in the respiratory chain and is found in some non-photosynthetic bacteria. The polypeptide is Cytochrome c2 (cycA) (Rhodopseudomonas palustris (strain ATCC BAA-98 / CGA009)).